A 216-amino-acid polypeptide reads, in one-letter code: MQAGKPILYSYFRSSCSWRVRIALALKGIDYEIVPINLIKDGGQQFTEEFQTLNPMKQVPALKIDGITIVQSLAIMEYLEETRPIPRLLPQDPQKRAIVRMISDLIASGIQPLQNLSVLKQVGQENQMQWAQKVITSGFNALEKILQSTAGKYCVGDEVSMADVCLVPQVANAERFKVDLSPYPTISHINKELLALEVFQVSHPRRQPDTPAELRT.

An N-acetylmethionine modification is found at methionine 1. Residues glycine 4–arginine 87 form the GST N-terminal domain. Glutathione is bound by residues serine 14–arginine 19 and glutamine 45. Lysine 57 carries the post-translational modification N6-succinyllysine. Residues valine 59, glutamine 71–serine 72, glutamine 111, and asparagine 115–serine 117 each bind glutathione. Residues aspartate 92 to alanine 212 form the GST C-terminal domain. The residue at position 136 (threonine 136) is a Phosphothreonine. Position 137 is a phosphoserine (serine 137). Lysine 177 bears the N6-succinyllysine mark. Serine 181 is subject to Phosphoserine.

This sequence belongs to the GST superfamily. Zeta family. As to quaternary structure, homodimer. Glutathione serves as cofactor. As to expression, expressed in liver, kidney, seminal glands and breast.

It is found in the cytoplasm. The enzyme catalyses 4-maleylacetoacetate = 4-fumarylacetoacetate. It catalyses the reaction RX + glutathione = an S-substituted glutathione + a halide anion + H(+). The protein operates within amino-acid degradation; L-phenylalanine degradation; acetoacetate and fumarate from L-phenylalanine: step 5/6. Its function is as follows. Probable bifunctional enzyme showing minimal glutathione-conjugating activity with ethacrynic acid and 7-chloro-4-nitrobenz-2-oxa-1, 3-diazole and maleylacetoacetate isomerase activity. Also has low glutathione peroxidase activity with t-butyl and cumene hydroperoxides. Is able to catalyze the glutathione dependent oxygenation of dichloroacetic acid to glyoxylic acid. The polypeptide is Maleylacetoacetate isomerase (Gstz1) (Mus musculus (Mouse)).